The chain runs to 581 residues: Putative phospholipase B-like 3 (581 aa).

The signal sequence occupies residues 1–16 (MKLLFFLFGLIFAVEQ). Asn-50, Asn-82, Asn-132, Asn-169, Asn-215, Asn-309, Asn-543, Asn-546, and Asn-560 each carry an N-linked (GlcNAc...) asparagine glycan.

The protein belongs to the phospholipase B-like family.

Its subcellular location is the secreted. In terms of biological role, putative phospholipase. This chain is Putative phospholipase B-like 3, found in Caenorhabditis elegans.